The chain runs to 535 residues: Beta-glucosidase 20 (535 aa).

The first 24 residues, 1–24, serve as a signal peptide directing secretion; sequence MGRFHKFPLLGLVLFLGLTGSLIA. A beta-D-glucoside-binding residues include Gln56 and His159. A glycan (N-linked (GlcNAc...) asparagine) is linked at Asn187. 204-205 provides a ligand contact to a beta-D-glucoside; sequence NE. The active-site Proton donor is Glu205. A disulfide bridge connects residues Cys224 and Cys235. A beta-D-glucoside is bound by residues Tyr351 and Glu424. Glu424 (nucleophile) is an active-site residue. Asn468 carries an N-linked (GlcNAc...) asparagine glycan. A beta-D-glucoside-binding positions include Trp475, 482–483, and Phe491; that span reads EW. N-linked (GlcNAc...) asparagine glycosylation occurs at Asn501. The Prevents secretion from ER motif lies at 532–535; it reads HDEL.

This sequence belongs to the glycosyl hydrolase 1 family.

The protein resides in the endoplasmic reticulum lumen. It catalyses the reaction Hydrolysis of terminal, non-reducing beta-D-glucosyl residues with release of beta-D-glucose.. The chain is Beta-glucosidase 20 from Arabidopsis thaliana (Mouse-ear cress).